The sequence spans 804 residues: MMEGLKKRTRKAFGIRKKEKDTDSTGSPDRDGIKKSNGAPNGFYAEIDWERYNSPELDEEGYSIRPEEPGSTKGKHFYSSSESEEEEESHKKFNIKIKPLQSKDILKNAATVDELKASIGNIALSPSPVRKSPRRSPGAIKWNLSSEEVARPRRSTPTPELISKKPPDDTTALAPLFGPPLESAFDEQKTEVLLDQPEIWGSGQPINPSMESPKLTRPFPTGTPPPLPPKNVPATPPRTGSPLTIGPGNDQSATEVKIEKLPSINDLDSIFGPVLSPKSVAVNAEEKWVHFSDTSPEHVTPELTPREKVVSPPATPDNPADSPAPGPLGPPGPTGPPGPPGPPRNVPSPLNLEEVQKKVAEQTFIKDDYLETISSPKDFGLGQRATPPPPPPPTYRTVVSSPGPGSGPGTGTTSGASSPARPATPLLPCSSTTPPPPPPRPPSRPKLPPGKPGVGDVSRPFSPPIHSSSPPPIAPLARAESTSSISSTNSLSAATTPTVENEQPSLVWFDRGKFYLTFEGSSRGPSPLTMGAQDTLPVAAAFTETVNAYFKGADPSKCIVKITGEMVLSFPAGITRHFANNPSPAALTFRVINFSRLEHVLPNPQLLCCDNTQNDANTKEFWVNMPNLMTHLKKVSEQKPQATYYNVDMLKYQVSAQGIQSTPLNLAVNWRCEPSSTDLRIDYKYNTDAMTTAVALNNVQFLVPIDGGVTKLQAVLPPAVRNAEQQRILWKIPDISQKSENGGVGSLLARFQLSEGPSKPSPLVVQFTSEGSTLSGCDIELVGAGYRFSLIKKRFAAGKYLADN.

Disordered stretches follow at residues 1-90 (MMEG…EESH), 124-181 (LSPS…GPPL), and 199-254 (IWGS…QSAT). A compositionally biased stretch (basic and acidic residues) spans 16-34 (RKKEKDTDSTGSPDRDGIK). Phosphoserine occurs at positions 54, 80, 81, 83, 125, 127, 132, and 145. A phosphothreonine mark is found at threonine 156 and threonine 158. Serine 212 bears the Phosphoserine mark. Residues 221–236 (TGTPPPLPPKNVPATP) show a composition bias toward pro residues. Phosphothreonine occurs at positions 223 and 235. Serine 241, serine 263, serine 276, serine 292, and serine 295 each carry phosphoserine. Positions 289-309 (VHFSDTSPEHVTPELTPREKV) are enriched in basic and acidic residues. The segment at 289–500 (VHFSDTSPEH…LSAATTPTVE (212 aa)) is disordered. 2 positions are modified to phosphothreonine: threonine 300 and threonine 304. A compositionally biased stretch (pro residues) spans 322-346 (SPAPGPLGPPGPTGPPGPPGPPRNV). At serine 348 the chain carries Phosphoserine. Positions 354-369 (EVQKKVAEQTFIKDDY) are enriched in basic and acidic residues. Phosphoserine is present on serine 375. Threonine 386 is modified (phosphothreonine). Residues 413–432 (TSGASSPARPATPLLPCSST) show a composition bias toward low complexity. Positions 433–451 (TPPPPPPRPPSRPKLPPGK) are enriched in pro residues. Low complexity-rich tracts occupy residues 458 to 468 (SRPFSPPIHSS) and 475 to 498 (PLARAESTSSISSTNSLSAATTPT). A Phosphoserine modification is found at serine 462. The MHD domain occupies 535-803 (TLPVAAAFTE…RFAAGKYLAD (269 aa)). Interaction with DPF motifs-containing proteins stretches follow at residues 537–543 (PVAAAFT), 569–571 (SFP), 643–646 (TYYN), and 789–794 (SLIKKR). A necessary and sufficient to mediate interaction with CANX region spans residues 625 to 804 (MPNLMTHLKK…FAAGKYLADN (180 aa)).

In terms of assembly, interacts with proteins essential or regulating the formation of functional clathrin-coated pits. Interacts with CANX. Interacts with AP2A1. Interacts with EPS15. Interacts with SH3GL3. Interacts with AMPH. Interacts with ITSN1 (via SH3 domains). Interacts with and REPS1.

The protein localises to the membrane. Its subcellular location is the clathrin-coated pit. Functionally, may function in clathrin-mediated endocytosis. Has both a membrane binding/tubulating activity and the ability to recruit proteins essential to the formation of functional clathrin-coated pits. Has a preference for membranes enriched in phosphatidylserine and phosphoinositides and is required for the endocytosis of the transferrin receptor. May also bind tubulin. May play a role in the regulation of energy homeostasis. The sequence is that of SH3-containing GRB2-like protein 3-interacting protein 1 (SGIP1) from Pongo abelii (Sumatran orangutan).